We begin with the raw amino-acid sequence, 502 residues long: Transmembrane prolyl 4-hydroxylase (502 aa).

A disordered region spans residues 1 to 29 (MAAAAVTGQRPETAAAEEASRPQWAPPDH). Over 1-60 (MAAAAVTGQRPETAAAEEASRPQWAPPDHCQAQAAAGLGDGEDAPVRPLCKPRGICSRAY) the chain is Cytoplasmic. Residues 61-81 (FLVLMVFVHLYLGNVLALLLF) traverse the membrane as a helical; Signal-anchor for type II membrane protein segment. At 82–502 (VHYSNGDESS…RAYRDARVEL (421 aa)) the chain is on the lumenal side. Residues 89 to 111 (ESSDPGPQHRAQGPGPEPTLGPL) are disordered. 2 EF-hand domains span residues 185-220 (TMQV…GNGW) and 224-259 (PESI…DFHK). Residues aspartate 198, asparagine 200, aspartate 202, histidine 204, glutamate 209, aspartate 237, aspartate 239, aspartate 241, and glutamate 248 each contribute to the Ca(2+) site. The region spanning 310-460 (LSEPLQVVRY…KWIANNWINV (151 aa)) is the Fe2OG dioxygenase domain. Fe cation-binding residues include histidine 328 and aspartate 330. Residues asparagine 348 and asparagine 368 are each glycosylated (N-linked (GlcNAc...) asparagine). Glutamate 374 is a Fe cation binding site. Asparagine 382 is a glycosylation site (N-linked (GlcNAc...) asparagine). Lysine 451 is a 2-oxoglutarate binding site.

Homodimer. The cofactor is Fe(2+). It depends on L-ascorbate as a cofactor. Glycosylated. Widely expressed with highest levels in adult pancreas, heart, skeletal muscle, brain, placenta, kidney and adrenal gland. Expressed at lower levels in epiphyseal cartilage and in fibroblasts.

Its subcellular location is the endoplasmic reticulum membrane. The enzyme catalyses L-prolyl-[hypoxia-inducible factor alpha subunit] + 2-oxoglutarate + O2 = trans-4-hydroxy-L-prolyl-[hypoxia-inducible factor alpha subunit] + succinate + CO2. Functionally, catalyzes the post-translational formation of 4-hydroxyproline in hypoxia-inducible factor (HIF) alpha proteins. Hydroxylates HIF1A at 'Pro-402' and 'Pro-564'. May function as a cellular oxygen sensor and, under normoxic conditions, may target HIF through the hydroxylation for proteasomal degradation via the von Hippel-Lindau ubiquitination complex. The chain is Transmembrane prolyl 4-hydroxylase (P4HTM) from Homo sapiens (Human).